Here is a 330-residue protein sequence, read N- to C-terminus: tRNA (guanine-N(7)-)-methyltransferase (330 aa).

The disordered stretch occupies residues 1–27 (MSTPPAKRQKRDQYRKRAAAAANEDTG). The span at 7-18 (KRQKRDQYRKRA) shows a compositional bias: basic residues. S-adenosyl-L-methionine is bound by residues Gly-95 and 118–119 (EI). A disordered region spans residues 138–185 (QNQLKNSSTTASESPAPAIPAEPATDGASPDAASTPETSNSPVPGGYQ). Residues 144 to 162 (SSTTASESPAPAIPAEPAT) show a composition bias toward low complexity. Residues 172–185 (TPETSNSPVPGGYQ) show a composition bias toward polar residues. S-adenosyl-L-methionine contacts are provided by residues 193–194 (NT) and Cys-213. Asp-216 is a catalytic residue. S-adenosyl-L-methionine is bound at residue 302–304 (TEE).

The protein belongs to the class I-like SAM-binding methyltransferase superfamily. TrmB family. In terms of assembly, forms a complex with trm82.

The protein localises to the nucleus. It catalyses the reaction guanosine(46) in tRNA + S-adenosyl-L-methionine = N(7)-methylguanosine(46) in tRNA + S-adenosyl-L-homocysteine. Its pathway is tRNA modification; N(7)-methylguanine-tRNA biosynthesis. Catalyzes the formation of N(7)-methylguanine at position 46 (m7G46) in tRNA. This Aspergillus oryzae (strain ATCC 42149 / RIB 40) (Yellow koji mold) protein is tRNA (guanine-N(7)-)-methyltransferase (trm8).